The sequence spans 492 residues: KAT8 regulatory NSL complex subunit 2 (492 aa).

A Glycyl lysine isopeptide (Lys-Gly) (interchain with G-Cter in SUMO2) cross-link involves residue lysine 78. The tract at residues 127 to 182 (LGSQTPESSRSEASRILDEDSWSDGEQEPITVDQTWRGDPDSEADSIDSDQEDPLK) is disordered. Threonine 131 carries the phosphothreonine modification. Over residues 135-144 (SRSEASRILD) the composition is skewed to basic and acidic residues. A phosphoserine mark is found at serine 147, serine 149, serine 168, serine 172, and serine 175. A compositionally biased stretch (acidic residues) spans 167-178 (DSEADSIDSDQE). A required for interaction with other NSL complex members region spans residues 308–364 (DVRCSNQSLPMTRHCLTHICQDTNQVLFKCCQGSEEVPCNKPVPVSLSEDPCCPLHF). Positions 455–492 (AGDGCRSQGSRNSEKGSAPLSQSGLATANGKPEPTSIS) are disordered.

Component of the NSL complex at least composed of KAT8/MOF, KANSL1, KANSL2, KANSL3, MCRS1, PHF20, OGT1/OGT, WDR5 and HCFC1.

It is found in the nucleus. The protein resides in the mitochondrion. Non-catalytic component of the NSL histone acetyltransferase complex, a multiprotein complex that mediates histone H4 acetylation at 'Lys-5'- and 'Lys-8' (H4K5ac and H4K8ac) at transcription start sites and promotes transcription initiation. Required for NSL complex stability and for transcription of intraciliary transport genes in both ciliated and non-ciliated cells by regulating histone H4 acetylation at 'Lys-5'- and 'Lys-12' (H4K5ac and H4K12ac). This is necessary for cilium assembly in ciliated cells and for organization of the microtubule cytoskeleton in non-ciliated cells. Required within the NSL complex to maintain nuclear architecture stability by promoting KAT8-mediated acetylation of lamin LMNA. The chain is KAT8 regulatory NSL complex subunit 2 (KANSL2) from Pongo abelii (Sumatran orangutan).